The primary structure comprises 330 residues: Bifunctional pinoresinol-lariciresinol reductase 2 (330 aa).

NADP(+) contacts are provided by residues 28-34 (GGTGYLG), R53, and K62. The active-site Proton acceptor is the K156. An NADP(+)-binding site is contributed by R160. H288 provides a ligand contact to substrate.

It belongs to the NmrA-type oxidoreductase family. Isoflavone reductase subfamily. Dimer. As to expression, expressed in leaves, stems, leaves and seeds.

It catalyses the reaction (+)-lariciresinol + NADP(+) = (+)-pinoresinol + NADPH + H(+). The catalysed reaction is (-)-secoisolariciresinol + NADP(+) = (+)-lariciresinol + NADPH + H(+). Its function is as follows. Reductase involved in lignan biosynthesis. Catalyzes the enantioselective conversion of (+)-pinoresinol into (+)-lariciresinol and of (+)-lariciresinol into (-)-secoisolariciresinol. Abstracts the 4R-hydride from the NADPH cofactor during catalysis. This Linum usitatissimum (Flax) protein is Bifunctional pinoresinol-lariciresinol reductase 2 (PLR_Lu2).